The chain runs to 193 residues: MFHLLAGLGNPGTQYTLTRHNAGFMVIDAILDKFHFPNFKKKNNALISIGNIESYRVILVKPWTFMNNSGVPIMNIVSLYKIPLDNMIVFHDEVEIDFCTIRVKKSGGNAGHNGLKSIDNFLGKDYWRVRFGIGHPRNKMDLSDYVLSHFHNLNAVNNTISSIVEHITLLLEKNHTTFTDKVRNTLKYEDIPD.

Tyr15 contributes to the tRNA binding site. Residue His20 is the Proton acceptor of the active site. Phe65, Asn67, and Asn113 together coordinate tRNA.

Belongs to the PTH family. As to quaternary structure, monomer.

The protein localises to the cytoplasm. It carries out the reaction an N-acyl-L-alpha-aminoacyl-tRNA + H2O = an N-acyl-L-amino acid + a tRNA + H(+). Its function is as follows. Hydrolyzes ribosome-free peptidyl-tRNAs (with 1 or more amino acids incorporated), which drop off the ribosome during protein synthesis, or as a result of ribosome stalling. Catalyzes the release of premature peptidyl moieties from peptidyl-tRNA molecules trapped in stalled 50S ribosomal subunits, and thus maintains levels of free tRNAs and 50S ribosomes. The chain is Peptidyl-tRNA hydrolase from Ehrlichia canis (strain Jake).